The sequence spans 519 residues: 2-isopropylmalate synthase (519 aa).

A Pyruvate carboxyltransferase domain is found at 5–267; that stretch reads VIIFDTTLRD…TTNVNPMEIS (263 aa). The Mn(2+) site is built by aspartate 14, histidine 202, histidine 204, and asparagine 238. The tract at residues 392 to 519 is regulatory domain; it reads RLESINVQSG…KEQLIHIDQV (128 aa).

The protein belongs to the alpha-IPM synthase/homocitrate synthase family. LeuA type 1 subfamily. Homodimer. It depends on Mn(2+) as a cofactor.

The protein resides in the cytoplasm. It catalyses the reaction 3-methyl-2-oxobutanoate + acetyl-CoA + H2O = (2S)-2-isopropylmalate + CoA + H(+). Its pathway is amino-acid biosynthesis; L-leucine biosynthesis; L-leucine from 3-methyl-2-oxobutanoate: step 1/4. In terms of biological role, catalyzes the condensation of the acetyl group of acetyl-CoA with 3-methyl-2-oxobutanoate (2-ketoisovalerate) to form 3-carboxy-3-hydroxy-4-methylpentanoate (2-isopropylmalate). The protein is 2-isopropylmalate synthase of Psychromonas ingrahamii (strain DSM 17664 / CCUG 51855 / 37).